The primary structure comprises 1293 residues: Phosphoribosylformylglycinamidine synthase (1293 aa).

Residues 305 to 316 (GAATGSGGEIRD) and alanine 676 each bind ATP. The disordered stretch occupies residues 305–328 (GAATGSGGEIRDEGATGRGSKPKA). Mg(2+) contacts are provided by aspartate 677, glutamate 716, asparagine 720, and aspartate 884. Serine 886 lines the ATP pocket. Residues 1040-1293 (MAILREQGVN…MFRNARVNLG (254 aa)) enclose the Glutamine amidotransferase type-1 domain. Cysteine 1133 (nucleophile) is an active-site residue. Active-site residues include histidine 1258 and glutamate 1260.

In the N-terminal section; belongs to the FGAMS family. Monomer.

The protein resides in the cytoplasm. The catalysed reaction is N(2)-formyl-N(1)-(5-phospho-beta-D-ribosyl)glycinamide + L-glutamine + ATP + H2O = 2-formamido-N(1)-(5-O-phospho-beta-D-ribosyl)acetamidine + L-glutamate + ADP + phosphate + H(+). The protein operates within purine metabolism; IMP biosynthesis via de novo pathway; 5-amino-1-(5-phospho-D-ribosyl)imidazole from N(2)-formyl-N(1)-(5-phospho-D-ribosyl)glycinamide: step 1/2. Phosphoribosylformylglycinamidine synthase involved in the purines biosynthetic pathway. Catalyzes the ATP-dependent conversion of formylglycinamide ribonucleotide (FGAR) and glutamine to yield formylglycinamidine ribonucleotide (FGAM) and glutamate. The polypeptide is Phosphoribosylformylglycinamidine synthase (Shewanella sp. (strain MR-7)).